The primary structure comprises 741 residues: Isocitrate dehydrogenase [NADP] (741 aa).

Residues N85 and S87 each coordinate NADP(+). D-threo-isocitrate contacts are provided by S132, N135, R139, R145, and K255. N135 serves as a coordination point for NADP(+). Residue D350 participates in Mn(2+) binding. Positions 420 and 547 each coordinate D-threo-isocitrate. Mn(2+) is bound at residue D548. Residues S585, H589, R600, D602, and R649 each contribute to the NADP(+) site.

The protein belongs to the monomeric-type IDH family. As to quaternary structure, monomer. Requires Mg(2+) as cofactor. Mn(2+) serves as cofactor.

It is found in the cytoplasm. It carries out the reaction D-threo-isocitrate + NADP(+) = 2-oxoglutarate + CO2 + NADPH. Activity is inhibited in the presence of Ca(2+). Catalyzes the oxidative decarboxylation of isocitrate to 2-oxoglutarate and carbon dioxide with the concomitant reduction of NADP(+). The polypeptide is Isocitrate dehydrogenase [NADP] (Azotobacter vinelandii).